Consider the following 553-residue polypeptide: Protein YloV (553 aa).

In terms of domain architecture, DhaL spans 9–201 (RTFAEMILAG…LLCVYEGFLA (193 aa)).

The polypeptide is Protein YloV (yloV) (Bacillus subtilis (strain 168)).